The chain runs to 167 residues: Zinc finger CCCH domain-containing protein 3 (167 aa).

Residues 63–91 (AAAIGVCQHFVRTGTCKFGDSCRYFHPKP) form a C3H1-type zinc finger. Residues 89-101 (PKPPPANPGPAPS) are compositionally biased toward pro residues. The tract at residues 89–167 (PKPPPANPGP…YPPFPFVDWG (79 aa)) is disordered. Residues 108–120 (MAQQSNIQGSQPN) are compositionally biased toward polar residues. Residues 149-167 (SLRPPPEGGYPPFPFVDWG) are compositionally biased toward pro residues.

The sequence is that of Zinc finger CCCH domain-containing protein 3 from Oryza sativa subsp. japonica (Rice).